The chain runs to 218 residues: MRAASQGRYTGPQAESRYVIPRFVERTSQGVREYDPYAKLFEERVIFLGVQIDDASANDVMAQLLCLESMDPDRDISVYINSPGGSFTALTAIYDTMQYVKPDVQTVCMGQAASAAAVLLAAGTPGKRMALPNARVLIHQPYSETGRGQVSDLEIAANEILRMRSQLEEMLAKHSTTPVEKIREDIERDKILTAEDALSYGLIDQIITTRKMDNSSLR.

Ser114 functions as the Nucleophile in the catalytic mechanism. His139 is a catalytic residue.

It belongs to the peptidase S14 family. Fourteen ClpP subunits assemble into 2 heptameric rings which stack back to back to give a disk-like structure with a central cavity, resembling the structure of eukaryotic proteasomes.

Its subcellular location is the cytoplasm. It catalyses the reaction Hydrolysis of proteins to small peptides in the presence of ATP and magnesium. alpha-casein is the usual test substrate. In the absence of ATP, only oligopeptides shorter than five residues are hydrolyzed (such as succinyl-Leu-Tyr-|-NHMec, and Leu-Tyr-Leu-|-Tyr-Trp, in which cleavage of the -Tyr-|-Leu- and -Tyr-|-Trp bonds also occurs).. Cleaves peptides in various proteins in a process that requires ATP hydrolysis. Has a chymotrypsin-like activity. Plays a major role in the degradation of misfolded proteins. Probably partially responsible for degradation of ECF sigma factor SigR prime. In Streptomyces coelicolor (strain ATCC BAA-471 / A3(2) / M145), this protein is ATP-dependent Clp protease proteolytic subunit 2.